We begin with the raw amino-acid sequence, 303 residues long: Counting factor 50 (303 aa).

The signal sequence occupies residues 1–24 (MNKMNNIFLIISSIILSIVIFVSG). Residues 28-240 (IDFSSEISVG…CSTSSGSASG (213 aa)) form the Ch-type lysozyme domain. N-linked (GlcNAc...) asparagine glycosylation occurs at N67. Residue E125 is part of the active site. N170 carries N-linked (GlcNAc...) asparagine glycosylation. Positions 226–303 (GSGSGCSTSS…GSGTGSGSSI (78 aa)) are S-G-S motif repeats. Residues 236–292 (GSASGSASGSASGSASGSNSGSSNSGSSNSGSSNSGSNSGSSNSGSGNSGSSNSGSA) show a composition bias toward low complexity. Positions 236 to 303 (GSASGSASGS…GSGTGSGSSI (68 aa)) are disordered. The segment covering 293 to 303 (SGSGTGSGSSI) has biased composition (gly residues).

The protein belongs to the glycosyl hydrolase 25 family. Monomer. Component of the counting factor (CF) complex, which includes cf60, cf50, cf45-1 and ctnA.

The protein localises to the secreted. It catalyses the reaction Hydrolysis of (1-&gt;4)-beta-linkages between N-acetylmuramic acid and N-acetyl-D-glucosamine residues in a peptidoglycan and between N-acetyl-D-glucosamine residues in chitodextrins.. In terms of biological role, cell-counting factor that limits the maximum size of the multicellular structure during aggregation. Has a very low lysozyme activity. In Dictyostelium discoideum (Social amoeba), this protein is Counting factor 50 (cf50-1).